The following is a 490-amino-acid chain: Tryptophan 5-hydroxylase 2 (490 aa).

Ser19 bears the Phosphoserine mark. Residues Leu34 to Gly62 form a disordered region. Over residues Lys50–Gly62 the composition is skewed to polar residues. An ACT domain is found at Ala65–Asn140. Positions 318, 323, and 363 each coordinate Fe cation.

This sequence belongs to the biopterin-dependent aromatic amino acid hydroxylase family. In terms of assembly, interacts with DNAJC12. Fe(2+) serves as cofactor.

It carries out the reaction (6R)-L-erythro-5,6,7,8-tetrahydrobiopterin + L-tryptophan + O2 = 5-hydroxy-L-tryptophan + (4aS,6R)-4a-hydroxy-L-erythro-5,6,7,8-tetrahydrobiopterin. Its pathway is aromatic compound metabolism; serotonin biosynthesis; serotonin from L-tryptophan: step 1/2. The chain is Tryptophan 5-hydroxylase 2 (TPH2) from Macaca mulatta (Rhesus macaque).